The sequence spans 157 residues: Siroheme decarboxylase NirG subunit (157 aa).

This sequence belongs to the Ahb/Nir family. In terms of assembly, forms a complex composed of NirDL, NirG and NirH. All proteins are required for the total conversion of siroheme to didecarboxysiroheme.

The enzyme catalyses siroheme + 2 H(+) = 12,18-didecarboxysiroheme + 2 CO2. It participates in porphyrin-containing compound metabolism. Its function is as follows. Involved in heme d1 biosynthesis. Catalyzes the decarboxylation of siroheme into didecarboxysiroheme. Siroheme is probably decarboxylated to monodecarboxysiroheme, which is in turn decarboxylated to didecarboxysiroheme. The polypeptide is Siroheme decarboxylase NirG subunit (Paracoccus pantotrophus (Thiosphaera pantotropha)).